The following is a 132-amino-acid chain: Agouti-signaling protein (132 aa).

The signal sequence occupies residues 1-22 (MDVTRLLLATLLVFLCFFTAYS). Asn-39 is a glycosylation site (N-linked (GlcNAc...) asparagine). Residues 61–87 (QISRKEAEKKRSSKKEASMKKVARPRT) are disordered. The span at 63–79 (SRKEAEKKRSSKKEASM) shows a compositional bias: basic and acidic residues. Intrachain disulfides connect Cys-93-Cys-108, Cys-100-Cys-114, Cys-107-Cys-125, Cys-111-Cys-132, and Cys-116-Cys-123. The region spanning 93–132 (CVATRDSCKPPAPACCDPCAFCQCRFFRSACSCRVLSLNC) is the Agouti domain.

The protein resides in the secreted. Its function is as follows. Involved in the regulation of melanogenesis. The binding of ASP to MC1R precludes alpha-MSH initiated signaling and thus blocks production of cAMP, leading to a down-regulation of eumelanogenesis (brown/black pigment) and thus increasing synthesis of pheomelanin (yellow/red pigment). The chain is Agouti-signaling protein (ASIP) from Macaca hecki (Heck's macaque).